Consider the following 666-residue polypeptide: MKQYAIQPATLEFNAEGTPVSRDFDDVYFSNDNGLEETRYVFLGGNRLAERFPVHSHPLFIVAESGFGTGLNFLTLWQAFDSFRSAHPQATLQRLHFISFEKFPLTRDDLALAHQHWPELAPWAEQLQAQWPLPLPGCHRLLLDRGRVTLDLWFGDINELTDQLDATLNQTVDAWFLDGFAPAKNPDMWTPNLFNAMARLARPGATLATFTSAGFVRRGLQEAGFTMQKRKGFGRKREMLCGVMEQHLMPTLSAPWFYRSGSEKRETAIIGGGIASALLSLALLRRGWQVTLYCADDQPAQGASGNRQGALYPLLSKHDAAINRFFPTAFTFARRLYDALPVSFDHDWCGVTQLGWDEKSQQKIAQMLSLALPAELASALNAEEAEQAVGVTTRCGGITYPAGGWLCPEQLTRAVIALATEQGLQTRFRHTLTSLVAQESRWQLRFMSGETASHETVVLANGHQINRFDQTRPLPVYAVGGQVSHIPTTPALSALRQVLCYDGYLTPQNPHNQQHCIGASYHRGDESTVWREEDQRQNRQRLLDCFPDAKWATEVDVSGNSARCGVRCATRDHLPMVGNVPDYHATLTHYADLADNKTSAAPAPVYPGLFMLGALGSRGLCSAPLCAEILAAQMSNEPIPLDASTLAALNPNRLWVRKLLKGKAVK.

The interval 1 to 245 is tRNA (mnm(5)s(2)U34)-methyltransferase; that stretch reads MKQYAIQPAT…KREMLCGVME (245 aa). Residues 270–666 are FAD-dependent cmnm(5)s(2)U34 oxidoreductase; the sequence is IGGGIASALL…RKLLKGKAVK (397 aa).

This sequence in the N-terminal section; belongs to the methyltransferase superfamily. tRNA (mnm(5)s(2)U34)-methyltransferase family. The protein in the C-terminal section; belongs to the DAO family. Requires FAD as cofactor.

The protein localises to the cytoplasm. The enzyme catalyses 5-aminomethyl-2-thiouridine(34) in tRNA + S-adenosyl-L-methionine = 5-methylaminomethyl-2-thiouridine(34) in tRNA + S-adenosyl-L-homocysteine + H(+). Functionally, catalyzes the last two steps in the biosynthesis of 5-methylaminomethyl-2-thiouridine (mnm(5)s(2)U) at the wobble position (U34) in tRNA. Catalyzes the FAD-dependent demodification of cmnm(5)s(2)U34 to nm(5)s(2)U34, followed by the transfer of a methyl group from S-adenosyl-L-methionine to nm(5)s(2)U34, to form mnm(5)s(2)U34. In Salmonella paratyphi B (strain ATCC BAA-1250 / SPB7), this protein is tRNA 5-methylaminomethyl-2-thiouridine biosynthesis bifunctional protein MnmC.